A 320-amino-acid polypeptide reads, in one-letter code: Malate dehydrogenase (320 aa).

NAD(+) is bound by residues 10-15 (GSGMIG) and D34. Residues R83 and R89 each contribute to the substrate site. NAD(+) is bound by residues N96 and 119–121 (ITN). 2 residues coordinate substrate: N121 and R152. H176 acts as the Proton acceptor in catalysis.

This sequence belongs to the LDH/MDH superfamily. MDH type 3 family.

It catalyses the reaction (S)-malate + NAD(+) = oxaloacetate + NADH + H(+). In terms of biological role, catalyzes the reversible oxidation of malate to oxaloacetate. This Rhizobium johnstonii (strain DSM 114642 / LMG 32736 / 3841) (Rhizobium leguminosarum bv. viciae) protein is Malate dehydrogenase.